Reading from the N-terminus, the 315-residue chain is Glycine--tRNA ligase alpha subunit (315 aa).

The protein belongs to the class-II aminoacyl-tRNA synthetase family. As to quaternary structure, tetramer of two alpha and two beta subunits.

It is found in the cytoplasm. It carries out the reaction tRNA(Gly) + glycine + ATP = glycyl-tRNA(Gly) + AMP + diphosphate. The protein is Glycine--tRNA ligase alpha subunit of Sorangium cellulosum (strain So ce56) (Polyangium cellulosum (strain So ce56)).